The chain runs to 351 residues: Holliday junction branch migration complex subunit RuvB (351 aa).

The interval 4-185 is large ATPase domain (RuvB-L); the sequence is HDRELVSPEA…FGFVAHMDFY (182 aa). ATP-binding positions include Leu24, Arg25, Gly66, Lys69, Thr70, Thr71, 132-134, Arg175, Tyr185, and Arg222; that span reads EDF. Thr70 contributes to the Mg(2+) binding site. The segment at 186-256 is small ATPAse domain (RuvB-S); sequence SPEELELILH…CARAALSLYE (71 aa). Residues 259 to 351 are head domain (RuvB-H); the sequence is DEGLDRLDRA…AALFDPDEEP (93 aa). 2 residues coordinate DNA: Arg314 and Arg319.

Belongs to the RuvB family. Homohexamer. Forms an RuvA(8)-RuvB(12)-Holliday junction (HJ) complex. HJ DNA is sandwiched between 2 RuvA tetramers; dsDNA enters through RuvA and exits via RuvB. An RuvB hexamer assembles on each DNA strand where it exits the tetramer. Each RuvB hexamer is contacted by two RuvA subunits (via domain III) on 2 adjacent RuvB subunits; this complex drives branch migration. In the full resolvosome a probable DNA-RuvA(4)-RuvB(12)-RuvC(2) complex forms which resolves the HJ.

Its subcellular location is the cytoplasm. It carries out the reaction ATP + H2O = ADP + phosphate + H(+). In terms of biological role, the RuvA-RuvB-RuvC complex processes Holliday junction (HJ) DNA during genetic recombination and DNA repair, while the RuvA-RuvB complex plays an important role in the rescue of blocked DNA replication forks via replication fork reversal (RFR). RuvA specifically binds to HJ cruciform DNA, conferring on it an open structure. The RuvB hexamer acts as an ATP-dependent pump, pulling dsDNA into and through the RuvAB complex. RuvB forms 2 homohexamers on either side of HJ DNA bound by 1 or 2 RuvA tetramers; 4 subunits per hexamer contact DNA at a time. Coordinated motions by a converter formed by DNA-disengaged RuvB subunits stimulates ATP hydrolysis and nucleotide exchange. Immobilization of the converter enables RuvB to convert the ATP-contained energy into a lever motion, pulling 2 nucleotides of DNA out of the RuvA tetramer per ATP hydrolyzed, thus driving DNA branch migration. The RuvB motors rotate together with the DNA substrate, which together with the progressing nucleotide cycle form the mechanistic basis for DNA recombination by continuous HJ branch migration. Branch migration allows RuvC to scan DNA until it finds its consensus sequence, where it cleaves and resolves cruciform DNA. In Thermobifida fusca (strain YX), this protein is Holliday junction branch migration complex subunit RuvB.